Consider the following 144-residue polypeptide: Cell division protein SepF (144 aa).

Residues 16 to 42 (DEMNEAPYTEAEQQEEEVPQAQKNERR) are disordered.

Belongs to the SepF family. Homodimer. Interacts with FtsZ.

It is found in the cytoplasm. In terms of biological role, cell division protein that is part of the divisome complex and is recruited early to the Z-ring. Probably stimulates Z-ring formation, perhaps through the cross-linking of FtsZ protofilaments. Its function overlaps with FtsA. The polypeptide is Cell division protein SepF (Lactobacillus gasseri (strain ATCC 33323 / DSM 20243 / BCRC 14619 / CIP 102991 / JCM 1131 / KCTC 3163 / NCIMB 11718 / NCTC 13722 / AM63)).